The following is a 142-amino-acid chain: HTH-type transcriptional regulator MntR (142 aa).

Residues 1 to 63 enclose the HTH dtxR-type domain; sequence MPTPSMEDYI…YEKYRGLVLT (63 aa). 6 residues coordinate Mn(2+): D8, E11, H77, E99, E102, and H103.

The protein belongs to the DtxR/MntR family. Homodimer.

The protein resides in the cytoplasm. DNA binding is strongly activated by Mn(2+). Central regulator of manganese homeostasis. The sequence is that of HTH-type transcriptional regulator MntR from Bacillus cereus (strain G9842).